Here is a 271-residue protein sequence, read N- to C-terminus: Protein CDV3 homolog (271 aa).

The segment covering 37 to 47 (KREVVKPKKPE) has biased composition (basic and acidic residues). 2 disordered regions span residues 37–151 (KREV…GHGP) and 186–271 (SQQA…DEAS). Over residues 48–61 (VAAGGVAVVGENEN) the composition is skewed to low complexity. Positions 73–82 (VEEEWKEFEE) are enriched in acidic residues. The span at 95 to 114 (QLSTISSARSRTAQESSESQ) shows a compositional bias: polar residues. The residue at position 134 (Ser134) is a Phosphoserine. Residues 224–242 (RPEEQRKKKNEPAFEEVRH) are compositionally biased toward basic and acidic residues.

The protein belongs to the CDV3 family.

In Drosophila melanogaster (Fruit fly), this protein is Protein CDV3 homolog.